The primary structure comprises 346 residues: Probable aldo-keto reductase 2 (346 aa).

Residue Tyr-63 is the Proton donor of the active site. Position 131 (His-131) interacts with substrate. Position 210 to 220 (210 to 220) interacts with NADP(+); the sequence is SPLGRGFLAAG.

It belongs to the aldo/keto reductase family. Aldo/keto reductase 13 subfamily.

The protein is Probable aldo-keto reductase 2 (AGD2) of Arabidopsis thaliana (Mouse-ear cress).